An 81-amino-acid chain; its full sequence is Sulfur carrier protein TusA (81 aa).

Catalysis depends on Cys-19, which acts as the Cysteine persulfide intermediate.

It belongs to the sulfur carrier protein TusA family.

It localises to the cytoplasm. Its function is as follows. Sulfur carrier protein which probably makes part of a sulfur-relay system. This Shewanella putrefaciens (strain CN-32 / ATCC BAA-453) protein is Sulfur carrier protein TusA.